A 478-amino-acid chain; its full sequence is Protein nucleotidyltransferase YdiU (478 aa).

Residues Gly-84, Gly-86, Arg-87, Lys-107, Asp-119, Gly-120, Arg-170, and Arg-177 each coordinate ATP. Residue Asp-246 is the Proton acceptor of the active site. Asn-247 and Asp-256 together coordinate Mg(2+). Asp-256 lines the ATP pocket.

Belongs to the SELO family. Requires Mg(2+) as cofactor. Mn(2+) is required as a cofactor.

The enzyme catalyses L-seryl-[protein] + ATP = 3-O-(5'-adenylyl)-L-seryl-[protein] + diphosphate. It carries out the reaction L-threonyl-[protein] + ATP = 3-O-(5'-adenylyl)-L-threonyl-[protein] + diphosphate. It catalyses the reaction L-tyrosyl-[protein] + ATP = O-(5'-adenylyl)-L-tyrosyl-[protein] + diphosphate. The catalysed reaction is L-histidyl-[protein] + UTP = N(tele)-(5'-uridylyl)-L-histidyl-[protein] + diphosphate. The enzyme catalyses L-seryl-[protein] + UTP = O-(5'-uridylyl)-L-seryl-[protein] + diphosphate. It carries out the reaction L-tyrosyl-[protein] + UTP = O-(5'-uridylyl)-L-tyrosyl-[protein] + diphosphate. In terms of biological role, nucleotidyltransferase involved in the post-translational modification of proteins. It can catalyze the addition of adenosine monophosphate (AMP) or uridine monophosphate (UMP) to a protein, resulting in modifications known as AMPylation and UMPylation. The chain is Protein nucleotidyltransferase YdiU from Escherichia coli (strain SE11).